The sequence spans 162 residues: Large ribosomal subunit protein uL10 (162 aa).

The protein belongs to the universal ribosomal protein uL10 family. In terms of assembly, part of the ribosomal stalk of the 50S ribosomal subunit. The N-terminus interacts with L11 and the large rRNA to form the base of the stalk. The C-terminus forms an elongated spine to which L12 dimers bind in a sequential fashion forming a multimeric L10(L12)X complex.

In terms of biological role, forms part of the ribosomal stalk, playing a central role in the interaction of the ribosome with GTP-bound translation factors. This chain is Large ribosomal subunit protein uL10, found in Acholeplasma laidlawii (strain PG-8A).